A 744-amino-acid chain; its full sequence is Integrator complex subunit 11 homolog (744 aa).

The Zn(2+) site is built by histidine 67, histidine 69, aspartate 71, histidine 72, histidine 156, and aspartate 177. Residues 67-72 (HFHLDH) carry the HXHXDH motif motif. Glutamate 202 is a catalytic residue. Histidine 425 is a Zn(2+) binding site. Residues 626-669 (NNNTSDDNNNNNNNNNNNNNNNNNNNNNNNNNNNNNNNNNNNNN) form a disordered region.

Belongs to the metallo-beta-lactamase superfamily. RNA-metabolizing metallo-beta-lactamase-like family. INTS11 subfamily. Component of the Integrator complex. The core complex associates with protein phosphatase 2A subunits, to form the Integrator-PP2A (INTAC) complex. It depends on Zn(2+) as a cofactor.

The protein localises to the nucleus. It is found in the cytoplasm. In terms of biological role, RNA endonuclease component of the integrator complex, a multiprotein complex that terminates RNA polymerase II (Pol II) transcription in the promoter-proximal region of genes. The integrator complex provides a quality checkpoint during transcription elongation by driving premature transcription termination of transcripts that are unfavorably configured for transcriptional elongation: the complex terminates transcription by (1) catalyzing dephosphorylation of the C-terminal domain (CTD) of Pol II subunit polr2a, (2) degrading the exiting nascent RNA transcript via endonuclease activity and (3) promoting the release of Pol II from bound DNA. The integrator complex is also involved in terminating the synthesis of non-coding Pol II transcripts, such as enhancer RNAs (eRNAs), small nuclear RNAs (snRNAs), telomerase RNAs and long non-coding RNAs (lncRNAs). Within the integrator complex, INTS11 constitutes the RNA endonuclease subunit that degrades exiting nascent RNA transcripts. This is Integrator complex subunit 11 homolog (ints11) from Dictyostelium discoideum (Social amoeba).